The chain runs to 690 residues: DNA ligase (690 aa).

NAD(+) contacts are provided by residues 36-40 (DAVYD), 85-86 (SL), and E124. K126 functions as the N6-AMP-lysine intermediate in the catalytic mechanism. NAD(+) is bound by residues R147, E184, K308, and K332. Zn(2+)-binding residues include C426, C429, C444, and C449. Positions 614-690 (NQSNVFDGKS…INENELKLLL (77 aa)) constitute a BRCT domain.

It belongs to the NAD-dependent DNA ligase family. LigA subfamily. Requires Mg(2+) as cofactor. It depends on Mn(2+) as a cofactor.

It catalyses the reaction NAD(+) + (deoxyribonucleotide)n-3'-hydroxyl + 5'-phospho-(deoxyribonucleotide)m = (deoxyribonucleotide)n+m + AMP + beta-nicotinamide D-nucleotide.. Functionally, DNA ligase that catalyzes the formation of phosphodiester linkages between 5'-phosphoryl and 3'-hydroxyl groups in double-stranded DNA using NAD as a coenzyme and as the energy source for the reaction. It is essential for DNA replication and repair of damaged DNA. This chain is DNA ligase, found in Prochlorococcus marinus (strain NATL1A).